A 256-amino-acid polypeptide reads, in one-letter code: Homeobox protein Hox-D13a (256 aa).

The segment at residues 191–250 (GRKKRVPYTKFQLKELEREYNTTKFITKENRRRIASSTNLSERQVTIWFQNRRVKDKKRP) is a DNA-binding region (homeobox).

It belongs to the Abd-B homeobox family.

The protein resides in the nucleus. Sequence-specific transcription factor which is part of a developmental regulatory system that provides cells with specific positional identities on the anterior-posterior axis. In Danio rerio (Zebrafish), this protein is Homeobox protein Hox-D13a (hoxd13a).